The following is a 93-amino-acid chain: C-C motif chemokine 17 (93 aa).

An N-terminal signal peptide occupies residues 1–23 (MMSLQMLLLAALLLGTSLQHASA). 2 cysteine pairs are disulfide-bonded: Cys33–Cys57 and Cys34–Cys73.

This sequence belongs to the intercrine beta (chemokine CC) family.

It is found in the secreted. In terms of biological role, chemokine, which displays chemotactic activity for T lymphocytes, preferentially Th2 cells, but not monocytes or granulocytes. Therefore plays an important role in a wide range of inflammatory and immunological processes. Acts by binding to CCR4 at T-cell surface. Mediates GM-CSF/CSF2-driven pain and inflammation. In the brain, required to maintain the typical, highly branched morphology of hippocampal microglia under homeostatic conditions. May be important for the appropriate adaptation of microglial morphology and synaptic plasticity to acute lipopolysaccharide (LPS)-induced neuroinflammation. Plays a role in wound healing, mainly by inducing fibroblast migration into the wound. The protein is C-C motif chemokine 17 (Ccl17) of Rattus norvegicus (Rat).